The sequence spans 118 residues: Large ribosomal subunit protein bL20 (118 aa).

This sequence belongs to the bacterial ribosomal protein bL20 family.

In terms of biological role, binds directly to 23S ribosomal RNA and is necessary for the in vitro assembly process of the 50S ribosomal subunit. It is not involved in the protein synthesizing functions of that subunit. The polypeptide is Large ribosomal subunit protein bL20 (Campylobacter curvus (strain 525.92)).